A 997-amino-acid chain; its full sequence is Protein translocase subunit SecA (997 aa).

Residues glutamine 102, 120–124 (GEGKT), and aspartate 521 each bind ATP. Residues 893-997 (PADASPNGVV…KYKKCHGAEA (105 aa)) are disordered. Basic and acidic residues predominate over residues 938–953 (AIEREFEKKKQQELSH). 4 residues coordinate Zn(2+): cysteine 981, cysteine 983, cysteine 992, and histidine 993. Positions 987–997 (KKYKKCHGAEA) are enriched in basic residues.

Belongs to the SecA family. As to quaternary structure, monomer and homodimer. Part of the essential Sec protein translocation apparatus which comprises SecA, SecYEG and auxiliary proteins SecDF. Other proteins may also be involved. It depends on Zn(2+) as a cofactor.

Its subcellular location is the cell inner membrane. The protein resides in the cytoplasm. The enzyme catalyses ATP + H2O + cellular proteinSide 1 = ADP + phosphate + cellular proteinSide 2.. Functionally, part of the Sec protein translocase complex. Interacts with the SecYEG preprotein conducting channel. Has a central role in coupling the hydrolysis of ATP to the transfer of proteins into and across the cell membrane, serving as an ATP-driven molecular motor driving the stepwise translocation of polypeptide chains across the membrane. The chain is Protein translocase subunit SecA from Acidobacterium capsulatum (strain ATCC 51196 / DSM 11244 / BCRC 80197 / JCM 7670 / NBRC 15755 / NCIMB 13165 / 161).